The following is a 462-amino-acid chain: Glutamate--tRNA ligase 2 (462 aa).

Positions 8–18 match the 'HIGH' region motif; the sequence is PSPTGLLHVGG. Positions 227 to 231 match the 'KMSKS' region motif; it reads PLSKR. An ATP-binding site is contributed by Lys-230.

Belongs to the class-I aminoacyl-tRNA synthetase family. Glutamate--tRNA ligase type 1 subfamily. In terms of assembly, monomer.

It localises to the cytoplasm. The enzyme catalyses tRNA(Glu) + L-glutamate + ATP = L-glutamyl-tRNA(Glu) + AMP + diphosphate. In terms of biological role, catalyzes the attachment of glutamate to tRNA(Glu) in a two-step reaction: glutamate is first activated by ATP to form Glu-AMP and then transferred to the acceptor end of tRNA(Glu). The protein is Glutamate--tRNA ligase 2 of Thermosipho melanesiensis (strain DSM 12029 / CIP 104789 / BI429).